The chain runs to 839 residues: Autophagy-related protein 9A (839 aa).

A disordered region spans residues 1 to 20 (MAQFDTEYQRLEASYSDSPP). At Ala2 the chain carries N-acetylalanine. Residues 2–61 (AQFDTEYQRLEASYSDSPPGEEDLLVHVAEGSKSPWHHIENLDLFFSRVYNLHQKNGFTC) lie on the Cytoplasmic side of the membrane. The Tyrosine-based sorting signal motif lies at 8-11 (YQRL). Phosphoserine is present on residues Ser14, Ser16, and Ser18. Residues 62–84 (MLIGEIFELMQFLFVVAFTTFLV) form a helical membrane-spanning segment. Residues 85 to 128 (SCVDYDILFANKMVNHSLHPTEPVKVTLPDAFLPAQVCSARIQE) lie on the Lumenal side of the membrane. N-linked (GlcNAc...) asparagine glycosylation is present at Asn99. The helical transmembrane segment at 129–154 (NGSLITILVIAGVFWIHRLIKFIYNI) threads the bilayer. The Cytoplasmic portion of the chain corresponds to 155–290 (CCYWEIHSFY…ELAQRLSNRI (136 aa)). An intramembrane segment occupies 291–301 (LWIGIANFLLC). Over 302 to 319 (PLILIWQILYAFFSYAEV) the chain is Cytoplasmic. An intramembrane segment occupies 320 to 328 (LKREPGALG). Residues 329 to 371 (ARCWSLYGRCYLRHFNELEHELQSRLNRGYKPASKYMNCFLSP) lie on the Cytoplasmic side of the membrane. The chain crosses the membrane as a helical span at residues 372–397 (LLTLLAKNGAFFAGSILAVLIALTIY). At 398–406 (DEDVLAVEH) the chain is on the lumenal side. Residues 407-424 (VLTTVTLLGVTVTVCRSF) form a helical membrane-spanning segment. Residues 425-470 (IPDQHMVFCPEQLLRVILAHIHYMPDHWQGNAHRSQTRDEFAQLFQ) are Cytoplasmic-facing. The stretch at 471 to 480 (YKAVFILEEL) is an intramembrane region. Topologically, residues 481 to 483 (LSP) are cytoplasmic. The stretch at 484–492 (IVTPLILIF) is an intramembrane region. Residues 493-839 (CLRPRALEII…DELPPQVHKV (347 aa)) lie on the Cytoplasmic side of the membrane. Residues Ser656, Ser735, Ser738, Ser741, and Ser828 each carry the phosphoserine modification. Disordered regions lie at residues 656–686 (SPLQ…SSGS) and 717–839 (HKQQ…VHKV). Residues 724–736 (EPERHVWHRRESD) are compositionally biased toward basic and acidic residues. Acidic residues-rich tracts occupy residues 737–747 (ESGESAPDEGG) and 823–832 (VPEEGSEDEL).

Belongs to the ATG9 family. As to quaternary structure, homotrimer; forms a homotrimer with a central pore that forms a path between the two membrane leaflets. Interacts (via cytoplasmic its C-terminus) with ATG2A. Interacts with SUPT20H. Interacts (via the tyrosine-based sorting signal motif) with AP4M1; promoting association with the AP-4 complex. Interacts with ARFIP1 and ARFIP2. Interacts with PI4K2A and PI4KB. Interacts with ATG4A; the interaction is direct and promotes ATG9A trafficking. In terms of processing, ufmylated in a DDRGK1 dependent manner.

The protein localises to the preautophagosomal structure membrane. It is found in the cytoplasmic vesicle. It localises to the autophagosome membrane. The protein resides in the golgi apparatus. Its subcellular location is the trans-Golgi network membrane. The protein localises to the late endosome membrane. It is found in the recycling endosome membrane. It localises to the endoplasmic reticulum membrane. The protein resides in the mitochondrion membrane. It catalyses the reaction a 1,2-diacyl-sn-glycero-3-phosphocholine(in) = a 1,2-diacyl-sn-glycero-3-phosphocholine(out). The catalysed reaction is a 1,2-diacyl-sn-glycero-3-phospho-L-serine(in) = a 1,2-diacyl-sn-glycero-3-phospho-L-serine(out). The enzyme catalyses a 1,2-diacyl-sn-glycero-3-phosphoethanolamine(in) = a 1,2-diacyl-sn-glycero-3-phosphoethanolamine(out). In terms of biological role, phospholipid scramblase involved in autophagy by mediating autophagosomal membrane expansion. Cycles between the preautophagosomal structure/phagophore assembly site (PAS) and the cytoplasmic vesicle pool and supplies membrane for the growing autophagosome. Lipid scramblase activity plays a key role in preautophagosomal structure/phagophore assembly by distributing the phospholipids that arrive through ATG2 (ATG2A or ATG2B) from the cytoplasmic to the luminal leaflet of the bilayer, thereby driving autophagosomal membrane expansion. Also required to supply phosphatidylinositol 4-phosphate to the autophagosome initiation site by recruiting the phosphatidylinositol 4-kinase beta (PI4KB) in a process dependent on ARFIP2, but not ARFIP1. In addition to autophagy, also plays a role in necrotic cell death. This Homo sapiens (Human) protein is Autophagy-related protein 9A.